Reading from the N-terminus, the 797-residue chain is LPS-assembly protein LptD (797 aa).

A signal peptide spans 1-30; sequence MKEGRKRLRAGYCYMLAGVVGVASTGSSRA.

This sequence belongs to the LptD family. In terms of assembly, component of the lipopolysaccharide transport and assembly complex. Interacts with LptE and LptA.

The protein localises to the cell outer membrane. Its function is as follows. Together with LptE, is involved in the assembly of lipopolysaccharide (LPS) at the surface of the outer membrane. This chain is LPS-assembly protein LptD, found in Hahella chejuensis (strain KCTC 2396).